An 834-amino-acid chain; its full sequence is U-box domain-containing protein 33 (834 aa).

A disordered region spans residues 232 to 308 (FSTPESEHQH…SPSSFPDGVD (77 aa)). Polar residues-rich tracts occupy residues 243 to 273 (SRVQ…GSLN) and 284 to 293 (SEVTGSATVM). The stretch at 334 to 462 (LRRQKAEKNA…SHAETSTLQL (129 aa)) forms a coiled coil. Positions 481-744 (FDSTLKIGEG…EVWRVLEPMR (264 aa)) constitute a Protein kinase domain. ATP contacts are provided by residues 487 to 495 (IGEGGYGSI) and K508. Residue D603 is the Proton acceptor of the active site. One can recognise a U-box domain in the interval 762-834 (IAPPYFICPI…AIQEWLQHHL (73 aa)).

It belongs to the protein kinase superfamily. Ser/Thr protein kinase family.

The catalysed reaction is L-seryl-[protein] + ATP = O-phospho-L-seryl-[protein] + ADP + H(+). It catalyses the reaction L-threonyl-[protein] + ATP = O-phospho-L-threonyl-[protein] + ADP + H(+). The enzyme catalyses S-ubiquitinyl-[E2 ubiquitin-conjugating enzyme]-L-cysteine + [acceptor protein]-L-lysine = [E2 ubiquitin-conjugating enzyme]-L-cysteine + N(6)-ubiquitinyl-[acceptor protein]-L-lysine.. It participates in protein modification; protein ubiquitination. Functionally, functions as an E3 ubiquitin ligase. The protein is U-box domain-containing protein 33 (PUB33) of Arabidopsis thaliana (Mouse-ear cress).